We begin with the raw amino-acid sequence, 297 residues long: Palmitoyl-protein thioesterase ABHD10, mitochondrial (297 aa).

Residues 1–43 (MAAWAPCRRWGWAAVSFGRHPGLSASLARKPPRAWWLSACRQK) constitute a mitochondrion transit peptide. One can recognise an AB hydrolase-1 domain in the interval 69-196 (IIFIPGYLSN…EIEMKGEWTL (128 aa)). Residues Ser-143, Asp-240, and His-270 each act as charge relay system in the active site.

Belongs to the AB hydrolase superfamily.

The protein resides in the mitochondrion. It catalyses the reaction S-hexadecanoyl-L-cysteinyl-[protein] + H2O = L-cysteinyl-[protein] + hexadecanoate + H(+). The catalysed reaction is mycophenolic acid O-acyl-beta-D-glucuronide + H2O = mycophenolate + D-glucuronate + H(+). Inhibited by palmostatin-B. Its function is as follows. Acts as an acyl-protein thioesterase that hydrolyzes fatty acids from acylated residues in proteins. Regulates the mitochondrial S-depalmitoylation of the nucleophilic active site residue of peroxiredoxin-5/PRDX5, a key antioxidant protein, therefore modulating mitochondrial antioxidant ability. Also catalyzes the deglucuronidation of mycophenolic acid acyl-glucuronide, an active metabolite of the immunosuppressant drug mycophenolate. In Mus musculus (Mouse), this protein is Palmitoyl-protein thioesterase ABHD10, mitochondrial.